The primary structure comprises 388 residues: Succinate--CoA ligase [ADP-forming] subunit beta (388 aa).

One can recognise an ATP-grasp domain in the interval lysine 9 to leucine 246. ATP-binding positions include lysine 46, glycine 53–glycine 55, glutamate 99, alanine 102, and glutamate 107. The Mg(2+) site is built by asparagine 201 and aspartate 215. Substrate contacts are provided by residues asparagine 266 and glycine 323–methionine 325.

Belongs to the succinate/malate CoA ligase beta subunit family. In terms of assembly, heterotetramer of two alpha and two beta subunits. Mg(2+) is required as a cofactor.

The enzyme catalyses succinate + ATP + CoA = succinyl-CoA + ADP + phosphate. It catalyses the reaction GTP + succinate + CoA = succinyl-CoA + GDP + phosphate. Its pathway is carbohydrate metabolism; tricarboxylic acid cycle; succinate from succinyl-CoA (ligase route): step 1/1. Functionally, succinyl-CoA synthetase functions in the citric acid cycle (TCA), coupling the hydrolysis of succinyl-CoA to the synthesis of either ATP or GTP and thus represents the only step of substrate-level phosphorylation in the TCA. The beta subunit provides nucleotide specificity of the enzyme and binds the substrate succinate, while the binding sites for coenzyme A and phosphate are found in the alpha subunit. This is Succinate--CoA ligase [ADP-forming] subunit beta from Verminephrobacter eiseniae (strain EF01-2).